We begin with the raw amino-acid sequence, 2207 residues long: DNA polymerase epsilon catalytic subunit A (2207 aa).

Disordered stretches follow at residues 1-20 (MPSRKPSKYGNKFRSGAASF), 1201-1233 (SMEKLKSSSPQKASGKRKHPENQTKTSLDPFAS), and 1934-1961 (RPESDDSSTPRLTQIPIGQPEPGQENEE). Zn(2+) contacts are provided by Cys-2075, Cys-2078, Cys-2113, and Cys-2116. Residues 2075–2116 (CSACCLIRDLDLCRDEDVLPERGSGSGPDSATSSRPWCCPFC) form a CysA-type zinc finger. [4Fe-4S] cluster is bound by residues Cys-2147, Cys-2150, Cys-2162, and Cys-2164. The CysB motif motif lies at 2147-2164 (CSKCGTLKISEFMEHCSC).

It belongs to the DNA polymerase type-B family. As to quaternary structure, heterotetramer. Consists of 4 subunits: pol2, dpb2, dpb3 and dpb4. It depends on [4Fe-4S] cluster as a cofactor.

Its subcellular location is the nucleus. The catalysed reaction is DNA(n) + a 2'-deoxyribonucleoside 5'-triphosphate = DNA(n+1) + diphosphate. In terms of biological role, DNA polymerase II participates in chromosomal DNA replication. In Emericella nidulans (strain FGSC A4 / ATCC 38163 / CBS 112.46 / NRRL 194 / M139) (Aspergillus nidulans), this protein is DNA polymerase epsilon catalytic subunit A (pol2).